The primary structure comprises 113 residues: ATP synthase epsilon chain (113 aa).

Belongs to the ATPase epsilon chain family. In terms of assembly, F-type ATPases have 2 components, CF(1) - the catalytic core - and CF(0) - the membrane proton channel. CF(1) has five subunits: alpha(3), beta(3), gamma(1), delta(1), epsilon(1). CF(0) has three main subunits: a, b and c.

It is found in the cell membrane. Functionally, produces ATP from ADP in the presence of a proton gradient across the membrane. The protein is ATP synthase epsilon chain of Wolbachia pipientis subsp. Culex pipiens (strain wPip).